A 135-amino-acid chain; its full sequence is MAESIVEKCIERVSNRFKLVLLASQRTHDLNTGASNPIQAAKFKGHKNTIVSLHEIAGKQVDTHELFSLLVGRCKEYMKGNMNNVYSSNTSKLANLLNFSDNTDLDASQESQDYEVDGEIDDEINDQDGDEEVSV.

The disordered stretch occupies residues 107–135; it reads ASQESQDYEVDGEIDDEINDQDGDEEVSV. The span at 112–135 shows a compositional bias: acidic residues; that stretch reads QDYEVDGEIDDEINDQDGDEEVSV.

This sequence belongs to the RNA polymerase subunit omega family. In terms of assembly, the RNAP catalytic core consists of 2 alpha, 1 beta, 1 beta' and 1 omega subunit. When a sigma factor is associated with the core the holoenzyme is formed, which can initiate transcription.

It carries out the reaction RNA(n) + a ribonucleoside 5'-triphosphate = RNA(n+1) + diphosphate. Promotes RNA polymerase assembly. Latches the N- and C-terminal regions of the beta' subunit thereby facilitating its interaction with the beta and alpha subunits. The polypeptide is DNA-directed RNA polymerase subunit omega (Wolbachia pipientis wMel).